Here is a 540-residue protein sequence, read N- to C-terminus: MARCRHHSGYLADDEAAHGTYVARLPKKHLLPEMRPTCKLGRVPHLPSMNRYSERQGHQQNLRRPRAFGGFLDFLTEGQVLDSLQTVVEQATECVATMKTEAGVPLVDVQDRVEVPNSRHRSRGRPSINTVHRHRARPTLCAGHPNNYPSCSSSMSDSHSSVTAGWLGSRSQDSDLGARGVGSLPPMRDKLLLEKNLKRLLRLESKGKVLNQHCSQRDSLLWDSLGSQSSSQPTREQPLSWFSGLLASTSVTPETSELGLGEQEMIFLKQELNKEIKSLLNQPTSFNLPTYCPLREPHRTLDFLSEHHLFPALQRVVSQAVDKLSHACRHNGFPLFPVTSELSPVFPGNSDLQPSSKASLPTDREARGETCYSPTSASSPKTSHRKSKDRRGSPSNAVQMATRFRLKVTPTEVSNVPIPSSQCMLKSPNSDLKLQKQTTASNHNHIPQPRHGLHLTLPAPGITVEVASCQGQLRGQVQHSLATPCHLHSHFPFPVFSPFLPLGKSFSTSPPTLCPEVSSRAGLEVLEGHLKGRGCFTHHF.

A coiled-coil region spans residues 79-102; it reads QVLDSLQTVVEQATECVATMKTEA. The tract at residues 347–400 is disordered; it reads PGNSDLQPSSKASLPTDREARGETCYSPTSASSPKTSHRKSKDRRGSPSNAVQM. Composition is skewed to polar residues over residues 350 to 359 and 372 to 381; these read SDLQPSSKAS and YSPTSASSPK. Ser393 is modified (phosphoserine).

It is found in the cytoplasm. The protein resides in the cytoskeleton. Its subcellular location is the microtubule organizing center. It localises to the centrosome. In Rattus norvegicus (Rat), this protein is Coiled-coil domain-containing protein 116 (Ccdc116).